Consider the following 75-residue polypeptide: UPF0346 protein LJ_1103 (75 aa).

It belongs to the UPF0346 family.

This chain is UPF0346 protein LJ_1103, found in Lactobacillus johnsonii (strain CNCM I-12250 / La1 / NCC 533).